A 229-amino-acid chain; its full sequence is Large ribosomal subunit protein uL1 (229 aa).

The protein belongs to the universal ribosomal protein uL1 family. Part of the 50S ribosomal subunit.

Functionally, binds directly to 23S rRNA. The L1 stalk is quite mobile in the ribosome, and is involved in E site tRNA release. Its function is as follows. Protein L1 is also a translational repressor protein, it controls the translation of the L11 operon by binding to its mRNA. In Streptococcus pneumoniae (strain ATCC 700669 / Spain 23F-1), this protein is Large ribosomal subunit protein uL1.